Reading from the N-terminus, the 447-residue chain is NADP-specific glutamate dehydrogenase (447 aa).

3 residues coordinate substrate: Lys92, Gln113, and Lys116. Lys128 acts as the Proton donor in catalysis. Gly167 is a substrate binding site. Thr211 and Asn242 together coordinate NADP(+). Position 380 (Ser380) interacts with substrate.

This sequence belongs to the Glu/Leu/Phe/Val dehydrogenases family. In terms of assembly, homohexamer.

It carries out the reaction L-glutamate + NADP(+) + H2O = 2-oxoglutarate + NH4(+) + NADPH + H(+). In terms of biological role, catalyzes the reversible oxidative deamination of glutamate to alpha-ketoglutarate and ammonia. The polypeptide is NADP-specific glutamate dehydrogenase (gdhA) (Salmonella typhimurium (strain LT2 / SGSC1412 / ATCC 700720)).